Reading from the N-terminus, the 336-residue chain is dTDP-glucose 4,6-dehydratase (336 aa).

Residues 7-13, 37-40, and 63-64 each bind NAD(+); these read GGAGFIG, DKLT, and DI. Thr87 serves as a coordination point for substrate. Thr102 contributes to the NAD(+) binding site. 127-129 serves as a coordination point for substrate; sequence TDE. The active-site Proton donor is the Asp128. Residues Glu129 and Tyr151 each act as proton acceptor in the active site. 151-155 is a binding site for NAD(+); it reads YAAAK. A substrate-binding site is contributed by Asn180. Asn181 is an NAD(+) binding site. Substrate is bound by residues 190–191, 206–208, Arg215, Asn250, and 274–277; these read KL, PVY, and RPGH.

It belongs to the NAD(P)-dependent epimerase/dehydratase family. dTDP-glucose dehydratase subfamily. In terms of assembly, homodimer. The cofactor is NAD(+).

It carries out the reaction dTDP-alpha-D-glucose = dTDP-4-dehydro-6-deoxy-alpha-D-glucose + H2O. The protein operates within antibiotic biosynthesis; novobiocin biosynthesis. Functionally, dTDP-glucose 4,6-dehydratase involved in the generation of the deoxysugar in the novobiocin biosynthesis pathway, an aminocoumarin family antibiotic that targets bacterial DNA gyrases. This chain is dTDP-glucose 4,6-dehydratase (novT), found in Streptomyces niveus (Streptomyces spheroides).